A 223-amino-acid polypeptide reads, in one-letter code: RNA-free ribonuclease P (223 aa).

This sequence belongs to the HARP family.

The enzyme catalyses Endonucleolytic cleavage of RNA, removing 5'-extranucleotides from tRNA precursor.. Its function is as follows. RNA-free RNase P that catalyzes the removal of the 5'-leader sequence from pre-tRNA to produce the mature 5'-terminus. In Methanococcus maripaludis (strain C6 / ATCC BAA-1332), this protein is RNA-free ribonuclease P.